We begin with the raw amino-acid sequence, 206 residues long: LexA repressor (206 aa).

Residues 28 to 48 (VREIGEAVGLASSSTVHGHLS) constitute a DNA-binding region (H-T-H motif). Residues Ser-129 and Lys-167 each act as for autocatalytic cleavage activity in the active site.

The protein belongs to the peptidase S24 family. Homodimer.

The enzyme catalyses Hydrolysis of Ala-|-Gly bond in repressor LexA.. Functionally, represses a number of genes involved in the response to DNA damage (SOS response), including recA and lexA. In the presence of single-stranded DNA, RecA interacts with LexA causing an autocatalytic cleavage which disrupts the DNA-binding part of LexA, leading to derepression of the SOS regulon and eventually DNA repair. The protein is LexA repressor of Staphylococcus epidermidis (strain ATCC 35984 / DSM 28319 / BCRC 17069 / CCUG 31568 / BM 3577 / RP62A).